Here is a 365-residue protein sequence, read N- to C-terminus: Chorismate synthase (365 aa).

The segment at 41–60 (MQHDLDRRRPGTSRYTTARR) is disordered. NADP(+) contacts are provided by arginine 48 and arginine 54. Residues 125-127 (RSS), 238-239 (NA), glycine 278, 293-297 (KPTSS), and arginine 319 contribute to the FMN site.

This sequence belongs to the chorismate synthase family. In terms of assembly, homotetramer. The cofactor is FMNH2.

It catalyses the reaction 5-O-(1-carboxyvinyl)-3-phosphoshikimate = chorismate + phosphate. Its pathway is metabolic intermediate biosynthesis; chorismate biosynthesis; chorismate from D-erythrose 4-phosphate and phosphoenolpyruvate: step 7/7. Its function is as follows. Catalyzes the anti-1,4-elimination of the C-3 phosphate and the C-6 proR hydrogen from 5-enolpyruvylshikimate-3-phosphate (EPSP) to yield chorismate, which is the branch point compound that serves as the starting substrate for the three terminal pathways of aromatic amino acid biosynthesis. This reaction introduces a second double bond into the aromatic ring system. The protein is Chorismate synthase of Shewanella amazonensis (strain ATCC BAA-1098 / SB2B).